The chain runs to 444 residues: 23S rRNA (uracil(1939)-C(5))-methyltransferase RlmD (444 aa).

In terms of domain architecture, TRAM spans 5 to 67 (RNRFDRTPFQ…RHFDEAKTVE (63 aa)). Residues cysteine 80, cysteine 86, cysteine 89, and cysteine 168 each contribute to the [4Fe-4S] cluster site. Positions 276, 305, 310, 326, 353, and 374 each coordinate S-adenosyl-L-methionine. Cysteine 400 serves as the catalytic Nucleophile.

This sequence belongs to the class I-like SAM-binding methyltransferase superfamily. RNA M5U methyltransferase family. RlmD subfamily.

It catalyses the reaction uridine(1939) in 23S rRNA + S-adenosyl-L-methionine = 5-methyluridine(1939) in 23S rRNA + S-adenosyl-L-homocysteine + H(+). Catalyzes the formation of 5-methyl-uridine at position 1939 (m5U1939) in 23S rRNA. In Xanthomonas campestris pv. campestris (strain 8004), this protein is 23S rRNA (uracil(1939)-C(5))-methyltransferase RlmD.